We begin with the raw amino-acid sequence, 518 residues long: Sensor protein kinase HptS (518 aa).

Helical transmembrane passes span 20–40 (IFPVFLVIIIGLVSFYAIYIW) and 222–242 (GITLLIVMAVVLVLLVIFGFI). One can recognise a Histidine kinase domain in the interval 297-513 (EQLIHSIEHT…LICYKIPLSR (217 aa)). His325 carries the phosphohistidine; by autocatalysis modification.

In terms of processing, autophosphorylated.

The protein resides in the cell membrane. It catalyses the reaction ATP + protein L-histidine = ADP + protein N-phospho-L-histidine.. In terms of biological role, member of the two-component regulatory system HptS/HptR that regulates genes involved in hexose phosphate transport system in response to changes in extracellular phosphate sources. May act as a sensor protein kinase which is autophosphorylated at a histidine residue and transfers its phosphate group to the conserved aspartic acid residue in the regulatory domain of HptS. In turn, HptS antagonizes CcpA-dependent transcription of a subset of CcpA-regulated genes involved in antibiotic susceptibility. The sequence is that of Sensor protein kinase HptS (hptS) from Staphylococcus aureus (strain MRSA252).